We begin with the raw amino-acid sequence, 200 residues long: Recombination protein RecR (200 aa).

The C4-type zinc-finger motif lies at 60–75 (CVYCQALTEDDVCNIC). Positions 83-177 (TKLCIIESML…KISRIGFGVP (95 aa)) constitute a Toprim domain.

It belongs to the RecR family.

May play a role in DNA repair. It seems to be involved in an RecBC-independent recombinational process of DNA repair. It may act with RecF and RecO. The chain is Recombination protein RecR from Francisella tularensis subsp. holarctica (strain OSU18).